An 83-amino-acid chain; its full sequence is U-actitoxin-Aeq6b (83 aa).

The first 20 residues, 1–20, serve as a signal peptide directing secretion; it reads MIYKAVFVCLVLVLLGDVFC. A propeptide spanning residues 21–36 is cleaved from the precursor; sequence SPRNSGGGTLNDNPFE. Proline amide is present on Pro82.

In terms of processing, contains 3 disulfide bonds. As to expression, expressed by acrorhagi.

The protein resides in the secreted. The protein localises to the nematocyst. In terms of biological role, toxin. This Actinia equina (Beadlet anemone) protein is U-actitoxin-Aeq6b.